We begin with the raw amino-acid sequence, 242 residues long: ATP synthase subunit a (242 aa).

A run of 6 helical transmembrane segments spans residues 29–49, 84–104, 114–134, 140–160, 181–201, and 203–223; these read SSIYMLLASILALTYFYLAFY, FIPLVFSLFIFILFCNLLGMT, IIVTFTLAILVFLIVTIVGFV, FLTLFLPHGTPLWLAPLIIVI, MAGHVLLKVIAGFTVSLMIYL, and FLPIPIMVILIGFEIFVAILQ.

Belongs to the ATPase A chain family. As to quaternary structure, F-type ATPases have 2 components, CF(1) - the catalytic core - and CF(0) - the membrane proton channel. CF(1) has five subunits: alpha(3), beta(3), gamma(1), delta(1), epsilon(1). CF(0) has three main subunits: a(1), b(2) and c(9-12). The alpha and beta chains form an alternating ring which encloses part of the gamma chain. CF(1) is attached to CF(0) by a central stalk formed by the gamma and epsilon chains, while a peripheral stalk is formed by the delta and b chains.

The protein localises to the cell inner membrane. Key component of the proton channel; it plays a direct role in the translocation of protons across the membrane. This Rickettsia peacockii (strain Rustic) protein is ATP synthase subunit a.